A 76-amino-acid chain; its full sequence is DNA gyrase inhibitor YacG (76 aa).

Residues C20, C23, C39, and C43 each contribute to the Zn(2+) site. The disordered stretch occupies residues 54-76 (EEKSIPGAPDLSDSDGWSDDMGY). A compositionally biased stretch (acidic residues) spans 65–76 (SDSDGWSDDMGY).

Belongs to the DNA gyrase inhibitor YacG family. In terms of assembly, interacts with GyrB. Zn(2+) serves as cofactor.

Inhibits all the catalytic activities of DNA gyrase by preventing its interaction with DNA. Acts by binding directly to the C-terminal domain of GyrB, which probably disrupts DNA binding by the gyrase. This Photobacterium profundum (strain SS9) protein is DNA gyrase inhibitor YacG.